The sequence spans 248 residues: ATP synthase subunit a (248 aa).

6 helical membrane-spanning segments follow: residues threonine 34–glycine 54, tyrosine 91–isoleucine 111, isoleucine 121–valine 141, phenylalanine 147–isoleucine 167, phenylalanine 197–isoleucine 217, and leucine 220–leucine 240.

It belongs to the ATPase A chain family. In terms of assembly, F-type ATPases have 2 components, CF(1) - the catalytic core - and CF(0) - the membrane proton channel. CF(1) has five subunits: alpha(3), beta(3), gamma(1), delta(1), epsilon(1). CF(0) has four main subunits: a, b, b' and c.

It localises to the cell inner membrane. Its function is as follows. Key component of the proton channel; it plays a direct role in the translocation of protons across the membrane. The protein is ATP synthase subunit a of Dinoroseobacter shibae (strain DSM 16493 / NCIMB 14021 / DFL 12).